A 183-amino-acid polypeptide reads, in one-letter code: Ribonuclease H (183 aa).

The RNase H type-1 domain occupies 2 to 151; it reads SQARFIAFSD…VDQLAQAAAR (150 aa). Residues Asp11, Glu57, Asp79, and Asp143 each coordinate Mg(2+).

Belongs to the RNase H family. In terms of assembly, monomer. Requires Mg(2+) as cofactor.

Its subcellular location is the cytoplasm. The enzyme catalyses Endonucleolytic cleavage to 5'-phosphomonoester.. In terms of biological role, endonuclease that specifically degrades the RNA of RNA-DNA hybrids. This chain is Ribonuclease H, found in Anaeromyxobacter sp. (strain K).